The primary structure comprises 21 residues: Putative sperm adenylate cyclase (21 aa).

The enzyme catalyses ATP = 3',5'-cyclic AMP + diphosphate. This is Putative sperm adenylate cyclase from Mus musculus (Mouse).